A 101-amino-acid chain; its full sequence is Protein S100-A3 (101 aa).

EF-hand domains are found at residues 12–47 (IVCT…TWTP) and 50–85 (FREC…LCLY). K26 contributes to the Ca(2+) binding site. C30 and C68 form a disulfide bridge. R51 is subject to Citrulline; by PAD3. D63, N65, D67, E69, and E74 together coordinate Ca(2+). Residues C83, C86, H87, and C93 each contribute to the Zn(2+) site.

This sequence belongs to the S-100 family. As to quaternary structure, homodimer and homotetramer for the citrullinated form. In terms of processing, more than half of the arginine residues undergo citrullination by PAD1 and PAD2. Arg-51 is specifically citrullinated by PAD3 and promotes tetramerization. Skin specific, specifically expressed in cuticle of pelage follicle.

The protein resides in the cytoplasm. Functionally, binds both calcium and zinc. May be involved in calcium-dependent cuticle cell differentiation, hair shaft and hair cuticular barrier formation. The polypeptide is Protein S100-A3 (S100a3) (Mus musculus (Mouse)).